Reading from the N-terminus, the 130-residue chain is Small ribosomal subunit protein uS8 (130 aa).

This sequence belongs to the universal ribosomal protein uS8 family. As to quaternary structure, part of the 30S ribosomal subunit. Contacts proteins S5 and S12.

Its function is as follows. One of the primary rRNA binding proteins, it binds directly to 16S rRNA central domain where it helps coordinate assembly of the platform of the 30S subunit. This Moorella thermoacetica (strain ATCC 39073 / JCM 9320) protein is Small ribosomal subunit protein uS8.